Consider the following 514-residue polypeptide: 1-pyrroline-5-carboxylate dehydrogenase (514 aa).

Active-site residues include Glu-286 and Cys-320.

Belongs to the aldehyde dehydrogenase family. RocA subfamily.

The catalysed reaction is L-glutamate 5-semialdehyde + NAD(+) + H2O = L-glutamate + NADH + 2 H(+). It functions in the pathway amino-acid degradation; L-proline degradation into L-glutamate; L-glutamate from L-proline: step 2/2. The chain is 1-pyrroline-5-carboxylate dehydrogenase from Staphylococcus aureus (strain MW2).